The following is a 196-amino-acid chain: Cysteine/O-acetylserine efflux protein (196 aa).

Residues 1-21 (MTPTLISAFLTYTLITALTPG) traverse the membrane as a helical segment. The Cytoplasmic segment spans residues 22-41 (PNNILALSSVTSHGLRRSLR). A helical transmembrane segment spans residues 42-62 (VLAGMSVGFIITMLICAALTF). At 63–70 (SLVELDSR) the chain is on the periplasmic side. A helical membrane pass occupies residues 71 to 91 (FTLVLGWIGAAYILWLAWQIA). The Cytoplasmic segment spans residues 92 to 114 (KSKPATGTPSVEPVGFWASLGLQ). A helical transmembrane segment spans residues 115-135 (FVNVKIILYGITALSTFVLPV). Topologically, residues 136–139 (TREP) are periplasmic. A helical membrane pass occupies residues 140 to 160 (VWLISVSLLLAAIGALGNLCW). Residues 161–170 (ALAGHLFQRL) are Cytoplasmic-facing. A helical membrane pass occupies residues 171-191 (FLLYGRQLNWMLAALLVYCAV). Over 192–196 (RIVVE) the chain is Periplasmic.

Belongs to the Rht family.

The protein localises to the cell inner membrane. The enzyme catalyses O-acetyl-L-serine(in) = O-acetyl-L-serine(out). The catalysed reaction is L-cysteine(in) = L-cysteine(out). Its function is as follows. Exporter of O-acetylserine (OAS) and cysteine. This chain is Cysteine/O-acetylserine efflux protein (eamB), found in Klebsiella pneumoniae subsp. pneumoniae (strain ATCC 700721 / MGH 78578).